The primary structure comprises 378 residues: MNIWLSMLTTTGLGAIIGGFTNHLAIKMLFRPHRPMYIGKFQVPFTPGLIPKRRDELAVQLGKMVVEHLLTPEGIGKKLTNEEFQKGLIHWAQVEVDKVITNEQSLRHMLGKWDVAHVEKEATEKIEQVITEKIQAFLEEYYTYTWEQALPHSVHEKIENAIPNVSAFILKRAIHFFESEEGKSRLSRMIDDFFASRGALLNLVGMFLGNVSVVDRVQPEVIKFLGQDGTKQLLTDVLQKEWEKLKGRDVKELETFVEKEMIVSSILSAVKVEETVSKFLNQSVQQVCEPVRETIIEKVVPNAVTKGLKWGGENVESILNNLHLAEIVQQEVSTFSTERLEDLVLSITKNELKMITYLGALLGGMIGIVQGLLLLFLK.

The next 2 helical transmembrane spans lie at methionine 1–threonine 21 and tyrosine 357–leucine 377.

Belongs to the UPF0754 family.

It localises to the cell membrane. The chain is UPF0754 membrane protein BCAH820_0954 from Bacillus cereus (strain AH820).